The chain runs to 1476 residues: ABC transporter G family member 17 (1476 aa).

Disordered regions lie at residues 13–45 (SENN…YDYD) and 68–91 (FREI…KPEN). A coiled-coil region spans residues 14–67 (ENNNNNNNNNNNNNNNNNNNLNNNNDNDYDYDSINNIEEKFENVSKELEGQSIK). The segment covering 15-39 (NNNNNNNNNNNNNNNNNNNLNNNND) has biased composition (low complexity). The 252-residue stretch at 151-402 (LNPFNYFKKD…FLDLGFDCEP (252 aa)) folds into the ABC transporter 1 domain. The 245-residue stretch at 507 to 751 (WGDKFTLTSR…SLSVKGENYL (245 aa)) folds into the ABC transmembrane type-2 1 domain. A run of 5 helical transmembrane segments spans residues 517-537 (FLTI…QPLT), 547-567 (AIFT…HGAL), 592-612 (ILID…IVYF), 623-643 (FFIF…LFRG), and 764-784 (LNVV…LFAV). The ABC transporter 2 domain maps to 838–1082 (FSWKSISYTV…LTSYFERHGV (245 aa)). 874-881 (GSSGAGKT) is a binding site for ATP. Helical transmembrane passes span 1182–1202 (FYTM…GFTF), 1219–1239 (SWEA…MFFI), 1260–1280 (LSMI…FFIA), 1298–1318 (WLMH…LGAA), 1322–1342 (IAIS…LCGV), and 1450–1470 (FGII…FVYL). The ABC transmembrane type-2 2 domain occupies 1182–1405 (FYTMGSFAQS…TDCQTYSAPF (224 aa)).

Belongs to the ABC transporter superfamily. ABCG family. PDR (TC 3.A.1.205) subfamily.

It is found in the membrane. This Dictyostelium discoideum (Social amoeba) protein is ABC transporter G family member 17 (abcG17-1).